Reading from the N-terminus, the 485-residue chain is MKFNSNDRIFISIFLGLAIIYTFPLLTHQSFFVDDLGRSLYGGLGWSGNGRPLSDFIFYIINFGTPIIDASPLPLMLGIVILALALSCIREKLFGDDYITASLCFMMILANPFFIENLSYRYDSLTMCMSVAISIISSYVAYQYKPINIIISSILTIAFLSLYQAALNTYAIFLLAFIISDVVKKNSISNITKNTASSVAGLIVGYFAYSYFIAKRLVTGSYNIEHSKIIEINSSLFEGIISNVLSFYRMFSTILNGDNYLIYYSLFFALIISLIVIVLKAIKRDENKKTKLLLVVLILLASMFFIIGPMIFLKSPIYAPRVLIGMGGFMFFCCLCVFYAFEDKQLISRIYFSFILLISTIFSYGAYNAINAQFQLEESIVNRISQDIDYLGFGRDKKNIKFIGTEPYAPINENIVIKHPLMRELIPRIINNDWMWSEVLMQRNVFSRNYRLYDKEVKLENGWKKSGNNVYDIGVVGETIVVRFN.

Helical transmembrane passes span 9 to 29, 66 to 86, 98 to 118, 131 to 151, 159 to 179, 194 to 214, 259 to 279, 293 to 313, 322 to 342, and 350 to 370; these read IFIS…LTHQ, PIID…ALAL, YITA…IENL, VAIS…NIII, FLSL…AFII, NTAS…YFIA, NYLI…VIVL, LLVV…MIFL, VLIG…YAFE, and IYFS…YNAI.

The protein resides in the host membrane. This is an uncharacterized protein from Salmonella typhimurium (Bacteriophage P22).